The chain runs to 320 residues: Cytochrome f (320 aa).

The first 35 residues, 1-35 (MQTRNNFSWIKEQITRSISVSLMIYIITRASISNA), serve as a signal peptide directing secretion. 4 residues coordinate heme: tyrosine 36, cysteine 56, cysteine 59, and histidine 60. Residues 286–306 (VQGLLFFLASVILAQIFLVLK) traverse the membrane as a helical segment.

The protein belongs to the cytochrome f family. In terms of assembly, the 4 large subunits of the cytochrome b6-f complex are cytochrome b6, subunit IV (17 kDa polypeptide, petD), cytochrome f and the Rieske protein, while the 4 small subunits are PetG, PetL, PetM and PetN. The complex functions as a dimer. The cofactor is heme.

It is found in the plastid. The protein resides in the chloroplast thylakoid membrane. In terms of biological role, component of the cytochrome b6-f complex, which mediates electron transfer between photosystem II (PSII) and photosystem I (PSI), cyclic electron flow around PSI, and state transitions. The sequence is that of Cytochrome f from Lactuca sativa (Garden lettuce).